Here is a 217-residue protein sequence, read N- to C-terminus: Melanocortin-2 receptor accessory protein 2A (217 aa).

Residue Asn-8 is glycosylated (N-linked (GlcNAc...) asparagine). The chain crosses the membrane as a helical span at residues 42–62; that stretch reads IVIGFWVGLAVFVIFMFFVLT.

This sequence belongs to the MRAP family. As to quaternary structure, interacts with mc4r.

The protein resides in the cell membrane. It is found in the endoplasmic reticulum membrane. Its function is as follows. Inhibitor of melanocortin receptor 4 (mc4r), a receptor involved in energy homeostasis. Plays a role during larval development in the control of energy homeostasis and body weight regulation by decreasing ligand-sensitivity of mc4r and mc4r-mediated generation of cAMP, leading to stimulate growth during larval development. Acts by stabilizing an inactive conformation of mc4r during embryonic development, when all the energy consumed is obtained from the yolk sac, possibly to speed the rapid maturation to the mobile free-feeding juvenile stage reached at 5 dpf. This chain is Melanocortin-2 receptor accessory protein 2A (mrap2a), found in Danio rerio (Zebrafish).